A 308-amino-acid chain; its full sequence is ADP-L-glycero-D-manno-heptose-6-epimerase (308 aa).

NADP(+)-binding positions include 10 to 11, 31 to 32, Lys-38, Lys-53, 75 to 79, and Asn-92; these read FI, DN, and EGACS. The active-site Proton acceptor is Tyr-139. Residue Lys-143 coordinates NADP(+). Residue Asn-168 coordinates substrate. NADP(+)-binding residues include Val-169 and Lys-177. The active-site Proton acceptor is the Lys-177. Residues Ser-179, His-186, 200 to 203, Arg-208, and Tyr-271 each bind substrate; that span reads FAGS.

This sequence belongs to the NAD(P)-dependent epimerase/dehydratase family. HldD subfamily. In terms of assembly, homopentamer. It depends on NADP(+) as a cofactor.

The enzyme catalyses ADP-D-glycero-beta-D-manno-heptose = ADP-L-glycero-beta-D-manno-heptose. The protein operates within nucleotide-sugar biosynthesis; ADP-L-glycero-beta-D-manno-heptose biosynthesis; ADP-L-glycero-beta-D-manno-heptose from D-glycero-beta-D-manno-heptose 7-phosphate: step 4/4. Catalyzes the interconversion between ADP-D-glycero-beta-D-manno-heptose and ADP-L-glycero-beta-D-manno-heptose via an epimerization at carbon 6 of the heptose. This Haemophilus influenzae (strain 86-028NP) protein is ADP-L-glycero-D-manno-heptose-6-epimerase.